A 121-amino-acid chain; its full sequence is Apoptin (121 aa).

2 disordered regions span residues M1–P28 and L57–L121. The span at R58–F70 shows a compositional bias: polar residues. Over residues R88–E102 the composition is skewed to basic and acidic residues.

The protein belongs to the gyrovirus apoptin family.

It localises to the host nucleus. Functionally, may act as transcriptional regulator. Induces apoptosis in infected cells. Element of infectious replication cycle. This is Apoptin (VP3) from Gallus gallus (Chicken).